Reading from the N-terminus, the 201-residue chain is FMN-dependent NADH:quinone oxidoreductase (201 aa).

Residues S10, 16 to 18 (SQS), 96 to 99 (MYNF), and 140 to 143 (SRGG) each bind FMN.

It belongs to the azoreductase type 1 family. In terms of assembly, homodimer. It depends on FMN as a cofactor.

The catalysed reaction is 2 a quinone + NADH + H(+) = 2 a 1,4-benzosemiquinone + NAD(+). The enzyme catalyses N,N-dimethyl-1,4-phenylenediamine + anthranilate + 2 NAD(+) = 2-(4-dimethylaminophenyl)diazenylbenzoate + 2 NADH + 2 H(+). Quinone reductase that provides resistance to thiol-specific stress caused by electrophilic quinones. In terms of biological role, also exhibits azoreductase activity. Catalyzes the reductive cleavage of the azo bond in aromatic azo compounds to the corresponding amines. This Citrobacter koseri (strain ATCC BAA-895 / CDC 4225-83 / SGSC4696) protein is FMN-dependent NADH:quinone oxidoreductase.